The sequence spans 285 residues: Cold sensitive U2 snRNA suppressor 2 (285 aa).

The region spanning 45-130 is the RRM 1 domain; sequence TSIYISGLPT…KQIRVERAQF (86 aa). Residues 135-149 show a composition bias toward basic and acidic residues; sequence GDNMHGKENDLKEFN. Residues 135–154 form a disordered region; the sequence is GDNMHGKENDLKEFNGPEPP. The residue at position 163 (Ser163) is a Phosphoserine. Residues 183-265 form the RRM 2 domain; sequence RTVIFANVFN…QKLLAFISGD (83 aa). The tract at residues 265–285 is disordered; sequence DENTSSTSDKNEDSEVEDDLI. Residues 276–285 are compositionally biased toward acidic residues; that stretch reads EDSEVEDDLI.

Belongs to the HTATSF1 family. Interacts with PRP11. Associates with the U2 snRNA.

Its function is as follows. U2 snRNP protein which helps to refold U2 into a structure favorable for its binding to SF3b and SF3a prior to spliceosome assembly. Mediates functional interactions between U2 RNA and PRP5. Enforces ATP dependence during formation of the prespliceosome by brokering an interaction between PRP5 and the U2 snRNP that depends on correct U2 RNA structure. This chain is Cold sensitive U2 snRNA suppressor 2 (CUS2), found in Saccharomyces cerevisiae (strain ATCC 204508 / S288c) (Baker's yeast).